The following is a 424-amino-acid chain: S-phase kinase-associated protein 2 (424 aa).

The mediates interaction with hepatitis C virus non-structural protein NS5A stretch occupies residues 1–220 (MHRKHLQEIP…LSLEGLRLSD (220 aa)). The interval 39-73 (SALEKEEPDSENIPQELLSNLGHPESPPRKRLKSK) is disordered. S64 bears the Phosphoserine mark. The Nuclear localization signal motif lies at 67 to 73 (RKRLKSK). N6-acetyllysine; by p300/EP300 occurs at positions 68 and 71. S72 and S75 each carry phosphoserine. An F-box domain is found at 94 to 140 (GVSWDSLPDELLLGIFSCLCLPELLKVSGVCKRWYRLASDESLWQTL). LRR repeat units lie at residues 151-176 (VTGR…PLAE), 177-204 (HFSP…ILSQ), 210-234 (NLSL…NLVR), 235-257 (LNLS…SCSR), 258-284 (LDEL…VSET), 286-308 (TQLN…LVRR), 309-330 (CPNL…CFQE), 334-356 (LNYL…LLEL), 359-378 (IPTL…TLQL), and 380-401 (KEAL…RPTI). At S179 the chain carries Phosphoserine. Residues 402–424 (GNKKNQEIWGIKCRLTLQKPSCL) form a mediates interaction with IFI27 region.

In terms of assembly, part of a SCF(SKP2) complex consisting of CUL1, RBX1, SKP1 and SKP2. Component of a SCF(SKP2)-like complex containing CUL1, SKP1, TRIM21 and SKP2. Interacts directly with CUL1 and SKP1. Interacts with CKS1. Interacts with ASB2 which is the substrate-recognition component of a probable ECS E3 ubiquitin-protein ligase complex; ASB2 is likely to bridge the formation of dimeric E3-ubiquitin-protein ligase complexes composed of an ECS complex and an SCF(SKP2) complex. Interacts with the cyclin-A-CDK2 complex. Interacts with ORC1, phosphorylated CDT1, phosphorylated RBL2, ELF4, phosphorylated RAG2, FOXO1, UBP43, MYC, TOB1, TAL1 and KMT2A/MLL1. Interacts with TRIM21. Interacts with cyclin-E. Interacts with IFI27; promotes the ubiquitin-mediated proteasomal degradation of hepatitis C virus/HCV non-structural protein NS5A. Interacts with CARM1. As to quaternary structure, (Microbial infection) Interacts with hepatitis C virus/HCV non-structural protein NS5A; promotes the ubiquitin-mediated proteasomal degradation of NS5A. Post-translationally, phosphorylated on serine and threonine resudues in response to DNA damage, promoting 'Lys-63'-linked ubiquitination of NBN. Ubiquitinated by the APC/C complex, leading to its degradation by the proteasome. Deubiquitinated by USP13. In terms of processing, acetylation at Lys-68 and Lys-71 increases stability through impairment of APC/C-mediated proteolysis and promotes cytoplasmic retention. Deacetylated by SIRT3.

The protein resides in the cytoplasm. The protein localises to the nucleus. It functions in the pathway protein modification; protein ubiquitination. In terms of biological role, substrate recognition component of a SCF (SKP1-CUL1-F-box protein) E3 ubiquitin-protein ligase complex which mediates the ubiquitination and subsequent proteasomal degradation of target proteins involved in cell cycle progression, signal transduction and transcription. Specifically recognizes phosphorylated CDKN1B/p27kip and is involved in regulation of G1/S transition. Degradation of CDKN1B/p27kip also requires CKS1. Recognizes target proteins ORC1, CDT1, RBL2, KMT2A/MLL1, CDK9, RAG2, NBN, FOXO1, UBP43, YTHDF2, and probably MYC, TOB1 and TAL1. Degradation of TAL1 also requires STUB1. Recognizes CDKN1A in association with CCNE1 or CCNE2 and CDK2. Promotes ubiquitination and destruction of CDH1 in a CK1-dependent manner, thereby regulating cell migration. Following phosphorylation in response to DNA damage, mediates 'Lys-63'-linked ubiquitination of NBN, promoting ATM recruitment to DNA damage sites and DNA repair via homologous recombination. Functionally, through the ubiquitin-mediated proteasomal degradation of hepatitis C virus non-structural protein 5A, has an antiviral activity towards that virus. This Homo sapiens (Human) protein is S-phase kinase-associated protein 2 (SKP2).